Here is a 213-residue protein sequence, read N- to C-terminus: Imidazole glycerol phosphate synthase subunit HisH (213 aa).

Residues 1–212 (MLAILDYKAG…HRYCTEAADA (212 aa)) enclose the Glutamine amidotransferase type-1 domain. The active-site Nucleophile is C79. Residues H187 and E189 contribute to the active site.

As to quaternary structure, heterodimer of HisH and HisF.

It localises to the cytoplasm. It catalyses the reaction 5-[(5-phospho-1-deoxy-D-ribulos-1-ylimino)methylamino]-1-(5-phospho-beta-D-ribosyl)imidazole-4-carboxamide + L-glutamine = D-erythro-1-(imidazol-4-yl)glycerol 3-phosphate + 5-amino-1-(5-phospho-beta-D-ribosyl)imidazole-4-carboxamide + L-glutamate + H(+). The catalysed reaction is L-glutamine + H2O = L-glutamate + NH4(+). Its pathway is amino-acid biosynthesis; L-histidine biosynthesis; L-histidine from 5-phospho-alpha-D-ribose 1-diphosphate: step 5/9. Functionally, IGPS catalyzes the conversion of PRFAR and glutamine to IGP, AICAR and glutamate. The HisH subunit catalyzes the hydrolysis of glutamine to glutamate and ammonia as part of the synthesis of IGP and AICAR. The resulting ammonia molecule is channeled to the active site of HisF. This chain is Imidazole glycerol phosphate synthase subunit HisH, found in Nitratidesulfovibrio vulgaris (strain DP4) (Desulfovibrio vulgaris).